We begin with the raw amino-acid sequence, 473 residues long: BPI fold-containing family B member 3 (473 aa).

The first 20 residues, 1 to 20, serve as a signal peptide directing secretion; sequence MMPGVYALLLLWGLATPCLG. Asn139 carries an N-linked (GlcNAc...) asparagine glycan. Residues Cys161 and Cys196 are joined by a disulfide bond.

The protein belongs to the BPI/LBP/Plunc superfamily. BPI/LBP family. In terms of tissue distribution, highly expressed in olfactory mucosa but undetectable in thymus, kidney, lung, brain, spleen and liver.

Its subcellular location is the secreted. Its function is as follows. May have the capacity to recognize and bind specific classes of odorants. May act as a carrier molecule, transporting odorants across the mucus layer to access receptor sites. May serve as a primary defense mechanism by recognizing and removing potentially harmful odorants or pathogenic microorganisms from the mucosa or clearing excess odorant from mucus to enable new odorant stimuli to be received. This chain is BPI fold-containing family B member 3, found in Rattus norvegicus (Rat).